The sequence spans 633 residues: Biosynthetic arginine decarboxylase (633 aa).

Lysine 101 is modified (N6-(pyridoxal phosphate)lysine). Residue 284 to 294 coordinates substrate; that stretch reads VDVGGGLGVDY.

Belongs to the Orn/Lys/Arg decarboxylase class-II family. SpeA subfamily. Mg(2+) serves as cofactor. Requires pyridoxal 5'-phosphate as cofactor.

It catalyses the reaction L-arginine + H(+) = agmatine + CO2. It participates in amine and polyamine biosynthesis; agmatine biosynthesis; agmatine from L-arginine: step 1/1. Catalyzes the biosynthesis of agmatine from arginine. The protein is Biosynthetic arginine decarboxylase of Aeromonas hydrophila subsp. hydrophila (strain ATCC 7966 / DSM 30187 / BCRC 13018 / CCUG 14551 / JCM 1027 / KCTC 2358 / NCIMB 9240 / NCTC 8049).